The chain runs to 1108 residues: Retinal guanylyl cyclase 2 (1108 aa).

Residues 1 to 50 (MFLGPWPFSRLLSWFAISSRLSGQHGLPSSKFLRCLCLLALLPLLRWGQA) form the signal peptide. The Extracellular segment spans residues 51-469 (LPYKIGVIGP…CQGGIDPALA (419 aa)). Cys-104 and Cys-132 are oxidised to a cystine. Residues 470-490 (MMVCFALLIALLSINGFAYFI) traverse the membrane as a helical segment. Topologically, residues 491–1108 (RRRINKIQLI…AERQLVRNKP (618 aa)) are cytoplasmic. In terms of domain architecture, Protein kinase spans 532 to 812 (FQIISEVQSG…DEIFNQFKTF (281 aa)). One can recognise a Guanylate cyclase domain in the interval 884–1014 (TLYFSDIVGF…DTVNTASRME (131 aa)).

This sequence belongs to the adenylyl cyclase class-4/guanylyl cyclase family. Homodimer. Interacts with RD3; promotes the exit of GUCY2F from the endoplasmic reticulum and its trafficking to the photoreceptor outer segments. In terms of processing, there are 9 conserved cysteine residues in sensory guanylate cyclases, 6 in the extracellular domain, which may be involved in intra- or interchain disulfide bonds. Retina.

It is found in the membrane. The protein localises to the photoreceptor outer segment membrane. It catalyses the reaction GTP = 3',5'-cyclic GMP + diphosphate. With respect to regulation, activated by GUCA1B when free calcium ions concentration is low, and inhibited by GUCA1B when free calcium ions concentration is high. Inhibited by RD3. In terms of biological role, responsible for the synthesis of cyclic GMP (cGMP) in rods and cones of photoreceptors. Plays an essential role in phototransduction, by mediating cGMP replenishment. May also participate in the trafficking of membrane-asociated proteins to the photoreceptor outer segment membrane. The protein is Retinal guanylyl cyclase 2 of Mus musculus (Mouse).